The primary structure comprises 461 residues: NADH-ubiquinone oxidoreductase chain 4 (461 aa).

Transmembrane regions (helical) follow at residues 20-42 (PAWLWPTMTTNSLLVATISLTWL), 61-81 (PLSTPLLILTCWLLPLMILAS), 93-113 (QRSFISLLISLQTFLIMAFGA), 114-134 (TEIILFYIMFEATLIPTLIII), 147-167 (GTYFLFYTVMGSLPLLVALLM), 197-217 (WTACLLAFLVKMPLYGVHLWL), 225-245 (PIAGSMVLAAVLLKLGGYGMM), 258-278 (LAYPFIILALWGIIMTGSICL), 285-304 (SLIAYSSVGHMGLVAAGILT), 309-331 (GFTGATVLMIAHGLTSSALFCLA), 351-371 (VILPLMTFWWLMMNLANLALP), 393-413 (TLTMTGLGMLITAIYSLHMFL), and 436-456 (LLMTMHALPMLLLILKPELIW).

Belongs to the complex I subunit 4 family.

It is found in the mitochondrion membrane. It carries out the reaction a ubiquinone + NADH + 5 H(+)(in) = a ubiquinol + NAD(+) + 4 H(+)(out). In terms of biological role, core subunit of the mitochondrial membrane respiratory chain NADH dehydrogenase (Complex I) that is believed to belong to the minimal assembly required for catalysis. Complex I functions in the transfer of electrons from NADH to the respiratory chain. The immediate electron acceptor for the enzyme is believed to be ubiquinone. The chain is NADH-ubiquinone oxidoreductase chain 4 (MT-ND4) from Latimeria chalumnae (Coelacanth).